Consider the following 1234-residue polypeptide: uncharacterized protein (1234 aa).

This is an uncharacterized protein from Schizosaccharomyces pombe (strain 972 / ATCC 24843) (Fission yeast).